Consider the following 249-residue polypeptide: NADH-quinone oxidoreductase subunit C (249 aa).

This sequence belongs to the complex I 30 kDa subunit family. As to quaternary structure, NDH-1 is composed of 14 different subunits. Subunits NuoB, C, D, E, F, and G constitute the peripheral sector of the complex.

Its subcellular location is the cell inner membrane. It carries out the reaction a quinone + NADH + 5 H(+)(in) = a quinol + NAD(+) + 4 H(+)(out). Functionally, NDH-1 shuttles electrons from NADH, via FMN and iron-sulfur (Fe-S) centers, to quinones in the respiratory chain. The immediate electron acceptor for the enzyme in this species is believed to be ubiquinone. Couples the redox reaction to proton translocation (for every two electrons transferred, four hydrogen ions are translocated across the cytoplasmic membrane), and thus conserves the redox energy in a proton gradient. The polypeptide is NADH-quinone oxidoreductase subunit C (Stenotrophomonas maltophilia (strain R551-3)).